A 258-amino-acid chain; its full sequence is Imidazole glycerol phosphate synthase subunit HisF (258 aa).

Residues Asp11 and Asp130 contribute to the active site.

This sequence belongs to the HisA/HisF family. As to quaternary structure, heterodimer of HisH and HisF.

The protein localises to the cytoplasm. It catalyses the reaction 5-[(5-phospho-1-deoxy-D-ribulos-1-ylimino)methylamino]-1-(5-phospho-beta-D-ribosyl)imidazole-4-carboxamide + L-glutamine = D-erythro-1-(imidazol-4-yl)glycerol 3-phosphate + 5-amino-1-(5-phospho-beta-D-ribosyl)imidazole-4-carboxamide + L-glutamate + H(+). It participates in amino-acid biosynthesis; L-histidine biosynthesis; L-histidine from 5-phospho-alpha-D-ribose 1-diphosphate: step 5/9. Functionally, IGPS catalyzes the conversion of PRFAR and glutamine to IGP, AICAR and glutamate. The HisF subunit catalyzes the cyclization activity that produces IGP and AICAR from PRFAR using the ammonia provided by the HisH subunit. This chain is Imidazole glycerol phosphate synthase subunit HisF, found in Buchnera aphidicola subsp. Baizongia pistaciae (strain Bp).